Reading from the N-terminus, the 370-residue chain is DNA replication and repair protein RecF (370 aa).

An ATP-binding site is contributed by 30–37; it reads GQNGMGKT.

This sequence belongs to the RecF family.

Its subcellular location is the cytoplasm. In terms of biological role, the RecF protein is involved in DNA metabolism; it is required for DNA replication and normal SOS inducibility. RecF binds preferentially to single-stranded, linear DNA. It also seems to bind ATP. This is DNA replication and repair protein RecF from Bacteroides fragilis (strain ATCC 25285 / DSM 2151 / CCUG 4856 / JCM 11019 / LMG 10263 / NCTC 9343 / Onslow / VPI 2553 / EN-2).